We begin with the raw amino-acid sequence, 419 residues long: UDP-N-acetylglucosamine 1-carboxyvinyltransferase (419 aa).

22–23 (KN) lines the phosphoenolpyruvate pocket. Arg91 serves as a coordination point for UDP-N-acetyl-alpha-D-glucosamine. Cys115 (proton donor) is an active-site residue. Cys115 bears the 2-(S-cysteinyl)pyruvic acid O-phosphothioketal mark. Residues 120-124 (RPVDL), 160-163 (KVSV), Asp305, and Val327 each bind UDP-N-acetyl-alpha-D-glucosamine.

The protein belongs to the EPSP synthase family. MurA subfamily.

It is found in the cytoplasm. The enzyme catalyses phosphoenolpyruvate + UDP-N-acetyl-alpha-D-glucosamine = UDP-N-acetyl-3-O-(1-carboxyvinyl)-alpha-D-glucosamine + phosphate. It functions in the pathway cell wall biogenesis; peptidoglycan biosynthesis. Its function is as follows. Cell wall formation. Adds enolpyruvyl to UDP-N-acetylglucosamine. The chain is UDP-N-acetylglucosamine 1-carboxyvinyltransferase from Salmonella arizonae (strain ATCC BAA-731 / CDC346-86 / RSK2980).